A 473-amino-acid chain; its full sequence is Adenosylhomocysteinase (473 aa).

The substrate site is built by Thr64, Asp139, and Glu199. An NAD(+)-binding site is contributed by 200–202 (TTT). Substrate contacts are provided by Lys229 and Asp233. NAD(+) contacts are provided by residues Asn234, 263 to 268 (GYGDVG), Glu286, Asn321, 342 to 344 (IGH), and Asn387.

It belongs to the adenosylhomocysteinase family. Requires NAD(+) as cofactor.

Its subcellular location is the cytoplasm. It carries out the reaction S-adenosyl-L-homocysteine + H2O = L-homocysteine + adenosine. It participates in amino-acid biosynthesis; L-homocysteine biosynthesis; L-homocysteine from S-adenosyl-L-homocysteine: step 1/1. May play a key role in the regulation of the intracellular concentration of adenosylhomocysteine. This is Adenosylhomocysteinase from Paraburkholderia xenovorans (strain LB400).